A 384-amino-acid chain; its full sequence is Glucose-fructose oxidoreductase domain-containing protein 2 (384 aa).

The N-terminal stretch at 1–25 is a signal peptide; sequence MMTLPGIGVFGTGNTARVLIQLLRA. The tract at residues 358 to 384 is disordered; it reads GEWESVELTNEETDSNQNLSEVIQHNL. Positions 372 to 384 are enriched in polar residues; the sequence is SNQNLSEVIQHNL.

This sequence belongs to the Gfo/Idh/MocA family.

The protein localises to the secreted. The protein resides in the extracellular space. Its subcellular location is the extracellular matrix. Its function is as follows. Promotes matrix assembly. The sequence is that of Glucose-fructose oxidoreductase domain-containing protein 2 (gfod2) from Xenopus laevis (African clawed frog).